Consider the following 29-residue polypeptide: uncharacterized protein (29 aa).

Its subcellular location is the plastid. The protein localises to the chloroplast. This is an uncharacterized protein from Trieres chinensis (Marine centric diatom).